Consider the following 643-residue polypeptide: Pesticidal crystal protein Cry11Aa (643 aa).

This sequence belongs to the delta endotoxin family.

In terms of biological role, promotes colloidosmotic lysis by binding to the midgut epithelial cells of mosquitos. The sequence is that of Pesticidal crystal protein Cry11Aa (cry11Aa) from Bacillus thuringiensis subsp. israelensis.